A 792-amino-acid polypeptide reads, in one-letter code: Probable CoA-transferase Rv1866 (792 aa).

Asp-558 serves as the catalytic Nucleophile.

Belongs to the CoA-transferase III family.

In terms of biological role, probable CoA-transferase. The chain is Probable CoA-transferase Rv1866 from Mycobacterium tuberculosis (strain ATCC 25618 / H37Rv).